The primary structure comprises 205 residues: COP9 signalosome complex subunit 7 (205 aa).

Residues 1–135 enclose the PCI domain; sequence MEEKISQAID…QTLHVSWALE (135 aa). S183 is subject to Phosphoserine.

It belongs to the CSN7/EIF3M family. CSN7 subfamily. As to quaternary structure, component of the COP9 signalosome (CSN) complex.

Its function is as follows. Component of the COP9 signalosome (CSN) complex that acts as an regulator of the ubiquitin (Ubl) conjugation pathway by mediating the deneddylation of the cullin subunit of SCF-type E3 ubiquitin-protein ligase complexes. This chain is COP9 signalosome complex subunit 7 (csn71), found in Schizosaccharomyces pombe (strain 972 / ATCC 24843) (Fission yeast).